A 1271-amino-acid polypeptide reads, in one-letter code: Diacylglycerol kinase kappa (1271 aa).

Residues 1–15 (MDRGAAAAQGTAPPQ) show a composition bias toward low complexity. The interval 1-160 (MDRGAAAAQG…PEPTPEPVTE (160 aa)) is disordered. The span at 23 to 44 (SPEPPPPWPPPPPPPAPPPAPP) shows a compositional bias: pro residues. Repeat copies occupy residues 48-51 (EASP), 52-55 (EPIP), 56-59 (EPCP), 60-63 (ELAP), 64-67 (GPCP), 68-71 (EATS), 72-75 (ESAT), 76-79 (ELYT), 80-83 (EPTP), 84-87 (EPAT), 88-91 (EPAS), 92-95 (EPAP), 96-99 (EPAT), 100-103 (EPAP), 104-107 (EPAT), 108-111 (EPAP), 112-115 (EPAP), 116-119 (EPAT), 120-123 (ESAP), 124-127 (EPTP), 128-131 (EPAL), 132-135 (ESVP), 136-139 (EPAP), 140-143 (ELTP), 144-147 (EVAP), 148-151 (ELAP), 152-155 (EPTP), 156-159 (EPVT), 160-163 (ELAP), 164-167 (EFCP), 168-171 (EAAP), 172-175 (EFRP), and 176-179 (SPAP). The interval 48 to 179 (EASPEPIPEP…APEFRPSPAP (132 aa)) is 33 X 4 AA approximate tandem repeats of E-P-A-P. The span at 52 to 66 (EPIPEPCPELAPGPC) shows a compositional bias: pro residues. Tyr78 is subject to Phosphotyrosine. A compositionally biased stretch (pro residues) spans 82–116 (TPEPATEPASEPAPEPATEPAPEPATEPAPEPAPE). Positions 139–149 (PELTPEVAPEL) are enriched in low complexity. Positions 190-209 (ERGLKTSPSPSPSPSPRTPM) are disordered. Residues 216 to 309 (KILKEGPMLK…WINIIKTIQQ (94 aa)) enclose the PH domain. Phorbol-ester/DAG-type zinc fingers lie at residues 327–377 (MHCW…SKDC) and 398–449 (PHQW…SKEC). A DAGKc domain is found at 487 to 622 (ACSCPLLIFI…LDRWSVMIRE (136 aa)). 2 disordered regions span residues 805–825 (DDPE…GTLS) and 1252–1271 (RHRE…RSQL). Residues 1199 to 1268 (PIFVPEEKSS…EGDDPLTPSR (70 aa)) form a required for localization to the plasma membrane region.

This sequence belongs to the eukaryotic diacylglycerol kinase family. Does not form homooligomers. Phosphorylated at Tyr-78 by some member of the SRC family in response to H(2)O(2). In terms of tissue distribution, expressed in testis, and to a lesser extent in placenta.

The protein localises to the cell membrane. It carries out the reaction a 1,2-diacyl-sn-glycerol + ATP = a 1,2-diacyl-sn-glycero-3-phosphate + ADP + H(+). The enzyme catalyses 1,2-di-(9Z-octadecenoyl)-sn-glycerol + ATP = 1,2-di-(9Z-octadecenoyl)-sn-glycero-3-phosphate + ADP + H(+). It participates in lipid metabolism; glycerolipid metabolism. Inhibited in response to H(2)O(2). Functionally, diacylglycerol kinase that converts diacylglycerol/DAG into phosphatidic acid/phosphatidate/PA and regulates the respective levels of these two bioactive lipids. Thereby, acts as a central switch between the signaling pathways activated by these second messengers with different cellular targets and opposite effects in numerous biological processes. This chain is Diacylglycerol kinase kappa, found in Homo sapiens (Human).